Here is a 351-residue protein sequence, read N- to C-terminus: UDP-N-acetylglucosamine--N-acetylmuramyl-(pentapeptide) pyrophosphoryl-undecaprenol N-acetylglucosamine transferase (351 aa).

Residues 13–15 (TGG), N125, R161, S189, I241, 260–265 (ALTVCE), and Q285 each bind UDP-N-acetyl-alpha-D-glucosamine.

The protein belongs to the glycosyltransferase 28 family. MurG subfamily.

The protein localises to the cell inner membrane. It catalyses the reaction di-trans,octa-cis-undecaprenyl diphospho-N-acetyl-alpha-D-muramoyl-L-alanyl-D-glutamyl-meso-2,6-diaminopimeloyl-D-alanyl-D-alanine + UDP-N-acetyl-alpha-D-glucosamine = di-trans,octa-cis-undecaprenyl diphospho-[N-acetyl-alpha-D-glucosaminyl-(1-&gt;4)]-N-acetyl-alpha-D-muramoyl-L-alanyl-D-glutamyl-meso-2,6-diaminopimeloyl-D-alanyl-D-alanine + UDP + H(+). It functions in the pathway cell wall biogenesis; peptidoglycan biosynthesis. Functionally, cell wall formation. Catalyzes the transfer of a GlcNAc subunit on undecaprenyl-pyrophosphoryl-MurNAc-pentapeptide (lipid intermediate I) to form undecaprenyl-pyrophosphoryl-MurNAc-(pentapeptide)GlcNAc (lipid intermediate II). This chain is UDP-N-acetylglucosamine--N-acetylmuramyl-(pentapeptide) pyrophosphoryl-undecaprenol N-acetylglucosamine transferase, found in Haemophilus influenzae (strain PittEE).